The chain runs to 194 residues: IMP cyclohydrolase (194 aa).

Belongs to the archaeal IMP cyclohydrolase family.

It carries out the reaction IMP + H2O = 5-formamido-1-(5-phospho-D-ribosyl)imidazole-4-carboxamide. The protein operates within purine metabolism; IMP biosynthesis via de novo pathway; IMP from 5-formamido-1-(5-phospho-D-ribosyl)imidazole-4-carboxamide: step 1/1. Functionally, catalyzes the cyclization of 5-formylamidoimidazole-4-carboxamide ribonucleotide to IMP. In Halobacterium salinarum (strain ATCC 29341 / DSM 671 / R1), this protein is IMP cyclohydrolase.